We begin with the raw amino-acid sequence, 256 residues long: Small ribosomal subunit protein uS3 (256 aa).

In terms of domain architecture, KH type-2 spans 39–111 (IREFLNENFS…EVILNIIEVR (73 aa)). The segment at 219-256 (DTRKPFEAGNQKRGQKRRPRNDQPGQRPQQRNRNSKED) is disordered. Low complexity predominate over residues 240 to 250 (DQPGQRPQQRN).

Belongs to the universal ribosomal protein uS3 family. In terms of assembly, part of the 30S ribosomal subunit. Forms a tight complex with proteins S10 and S14.

Functionally, binds the lower part of the 30S subunit head. Binds mRNA in the 70S ribosome, positioning it for translation. The sequence is that of Small ribosomal subunit protein uS3 from Acholeplasma laidlawii (strain PG-8A).